We begin with the raw amino-acid sequence, 58 residues long: Small ribosomal subunit protein bS21 (58 aa).

The disordered stretch occupies residues glutamate 36 to lysine 58. The segment covering valine 43 to lysine 58 has biased composition (basic residues).

It belongs to the bacterial ribosomal protein bS21 family.

The polypeptide is Small ribosomal subunit protein bS21 (Clostridium kluyveri (strain NBRC 12016)).